The sequence spans 370 residues: Lysophosphatidic acid receptor 4 (370 aa).

The Extracellular segment spans residues 1-43; it reads MGDRRFIDFQFQDSNSSLRPRLGNATANNTCIVDDSFKYNLNG. N-linked (GlcNAc...) asparagine glycosylation is found at Asn15, Asn24, and Asn28. Residues 44–64 form a helical membrane-spanning segment; it reads AVYSVVFILGLITNSVSLFVF. Residues 65 to 73 are Cytoplasmic-facing; the sequence is CFRMKMRSE. The chain crosses the membrane as a helical span at residues 74 to 94; it reads TAIFITNLAVSDLLFVCTLPF. Over 95–112 the chain is Extracellular; it reads KIFYNFNRHWPFGDTLCK. The cysteines at positions 111 and 188 are disulfide-linked. A helical transmembrane segment spans residues 113 to 133; the sequence is ISGTAFLTNIYGSMLFLTCIS. Residues 134–155 are Cytoplasmic-facing; sequence VDRFLAIVYPFRSRTIRTRRNS. The chain crosses the membrane as a helical span at residues 156-176; it reads AIVCAGVWILVLSGGISASLF. Topologically, residues 177 to 203 are extracellular; sequence STTNVNNATTTCFEGFSKRVWKTYLSK. An N-linked (GlcNAc...) asparagine glycan is attached at Asn183. A helical membrane pass occupies residues 204–224; that stretch reads ITIFIEVVGFIIPLILNVSCS. Topologically, residues 225-254 are cytoplasmic; the sequence is SVVLRTLRKPATLSQIGTNKKKVLKMITVH. Residues 255–275 traverse the membrane as a helical segment; that stretch reads MAVFVVCFVPYNSVLFLYALV. Over 276–294 the chain is Extracellular; it reads RSQAITNCFLERFAKIMYP. The helical transmembrane segment at 295–315 threads the bilayer; the sequence is ITLCLATLNCCFDPFIYYFTL. Residues 316-370 are Cytoplasmic-facing; it reads ESFQKSFYINAHIRMESLFKTETPLTTKPSLPAIQEEVSDQTTNNGGELMLESTF.

It belongs to the G-protein coupled receptor 1 family. High expression in ovary. Not detected in the brain regions thalamus, putamen, caudate, frontal cortex, pons, hypothalamus and hippocampus.

The protein resides in the cell membrane. Its function is as follows. Receptor for lysophosphatidic acid (LPA), a mediator of diverse cellular activities. Transduces a signal by increasing the intracellular calcium ions and by stimulating adenylyl cyclase activity. The rank order of potency for agonists of this receptor is 1-oleoyl- &gt; 1-stearoyl- &gt; 1-palmitoyl- &gt; 1-myristoyl- &gt; 1-alkyl- &gt; 1-alkenyl-LPA. The sequence is that of Lysophosphatidic acid receptor 4 (LPAR4) from Homo sapiens (Human).